Here is a 60-residue protein sequence, read N- to C-terminus: Large ribosomal subunit protein uL30 (60 aa).

Belongs to the universal ribosomal protein uL30 family. As to quaternary structure, part of the 50S ribosomal subunit.

The polypeptide is Large ribosomal subunit protein uL30 (Polaromonas sp. (strain JS666 / ATCC BAA-500)).